We begin with the raw amino-acid sequence, 187 residues long: UPF0301 protein VV2869 (187 aa).

The protein belongs to the UPF0301 (AlgH) family.

The sequence is that of UPF0301 protein VV2869 from Vibrio vulnificus (strain YJ016).